A 208-amino-acid chain; its full sequence is LexA repressor (208 aa).

A DNA-binding region (H-T-H motif) is located at residues 30-50 (VREICAAVGLSSTSTVHGHLS). Residues serine 129 and lysine 167 each act as for autocatalytic cleavage activity in the active site.

The protein belongs to the peptidase S24 family. As to quaternary structure, homodimer.

The enzyme catalyses Hydrolysis of Ala-|-Gly bond in repressor LexA.. Functionally, represses a number of genes involved in the response to DNA damage (SOS response), including recA and lexA. In the presence of single-stranded DNA, RecA interacts with LexA causing an autocatalytic cleavage which disrupts the DNA-binding part of LexA, leading to derepression of the SOS regulon and eventually DNA repair. In Lactobacillus acidophilus (strain ATCC 700396 / NCK56 / N2 / NCFM), this protein is LexA repressor.